The following is a 908-amino-acid chain: Protein translocase subunit SecA (908 aa).

ATP is bound by residues Q87, 105–109, and D512; that span reads GEGKT. The disordered stretch occupies residues 876 to 908; it reads QAPMIRDGEKVGRNDPCPCGSGRKYKQCHGKLS. Residues C892, C894, C903, and H904 each contribute to the Zn(2+) site. The segment covering 898–908 has biased composition (basic residues); that stretch reads RKYKQCHGKLS.

This sequence belongs to the SecA family. In terms of assembly, monomer and homodimer. Part of the essential Sec protein translocation apparatus which comprises SecA, SecYEG and auxiliary proteins SecDF-YajC and YidC. Requires Zn(2+) as cofactor.

It is found in the cell inner membrane. It localises to the cytoplasm. It catalyses the reaction ATP + H2O + cellular proteinSide 1 = ADP + phosphate + cellular proteinSide 2.. In terms of biological role, part of the Sec protein translocase complex. Interacts with the SecYEG preprotein conducting channel. Has a central role in coupling the hydrolysis of ATP to the transfer of proteins into and across the cell membrane, serving both as a receptor for the preprotein-SecB complex and as an ATP-driven molecular motor driving the stepwise translocation of polypeptide chains across the membrane. This is Protein translocase subunit SecA from Shewanella baltica (strain OS185).